The chain runs to 620 residues: Protein translocase subunit SecD (620 aa).

6 helical membrane-spanning segments follow: residues 10–30 (YLLILAVLAVGFIYSAPNLYP), 464–484 (LWGMLFVSLFIIVIYRFFGVI), 488–507 (ALAFNMVMLVALMSILGATL), 511–533 (GIAGIVLTMGMAVDANVLIFSRI), 555–575 (FTAILDANLTSLLVGGILYAM), and 582–602 (GFAVTMSLGIITSMFTAIMVT).

This sequence belongs to the SecD/SecF family. SecD subfamily. As to quaternary structure, forms a complex with SecF. Part of the essential Sec protein translocation apparatus which comprises SecA, SecYEG and auxiliary proteins SecDF-YajC and YidC.

The protein resides in the cell inner membrane. Part of the Sec protein translocase complex. Interacts with the SecYEG preprotein conducting channel. SecDF uses the proton motive force (PMF) to complete protein translocation after the ATP-dependent function of SecA. In Pseudomonas aeruginosa (strain ATCC 15692 / DSM 22644 / CIP 104116 / JCM 14847 / LMG 12228 / 1C / PRS 101 / PAO1), this protein is Protein translocase subunit SecD.